A 520-amino-acid polypeptide reads, in one-letter code: General transcription factor 3C polypeptide 5 (520 aa).

N-acetylalanine is present on alanine 2. A disordered region spans residues 466–520 (LFSNTGKADRGKEQLMFESGEEEEEEEEEEEEEEEDFKPSDGSENEMETEILDYV). Composition is skewed to acidic residues over residues 484 to 501 (SGEEEEEEEEEEEEEEED) and 508 to 520 (SENEMETEILDYV).

The protein belongs to the TFIIIC subunit 5 family. Part of the TFIIIC subcomplex TFIIIC2, consisting of six subunits, GTF3C1, GTF3C2, GTF3C3, GTF3C4, GTF3C5 and GTF3C6. Interacts with BRF1, GTF3C6 and TBP.

It is found in the nucleus. In terms of biological role, involved in RNA polymerase III-mediated transcription. Integral, tightly associated component of the DNA-binding TFIIIC2 subcomplex that directly binds tRNA and virus-associated RNA promoters. This is General transcription factor 3C polypeptide 5 (Gtf3c5) from Mus musculus (Mouse).